The chain runs to 177 residues: Tumor necrosis factor ligand superfamily member 18 (177 aa).

Residues 1–27 (MCLSHLENMPLSHSRTQGAQRSSWKLW) are Cytoplasmic-facing. Residues 28-48 (LFCSIVMLLFLCSFSWLIFIF) form a helical; Signal-anchor for type II membrane protein membrane-spanning segment. Positions 47–170 (IFLQLETAKE…NNTYWGIILL (124 aa)) constitute a THD domain. The Extracellular portion of the chain corresponds to 49-177 (LQLETAKEPC…ILLANPQFIS (129 aa)). C58 and C78 form a disulfide bridge. N129 and N161 each carry an N-linked (GlcNAc...) asparagine glycan.

This sequence belongs to the tumor necrosis factor family. Homodimer. Homotrimer. Expressed at high levels in the small intestine, ovary, testis, kidney and endothelial cells.

It localises to the cell membrane. Cytokine that binds to TNFRSF18/AITR/GITR. Regulates T-cell responses. Can function as costimulator and lower the threshold for T-cell activation and T-cell proliferation. Important for interactions between activated T-lymphocytes and endothelial cells. Mediates activation of NF-kappa-B. Triggers increased phosphorylation of STAT1 and up-regulates expression of VCAM1 and ICAM1. Promotes leukocyte adhesion to endothelial cells. Regulates migration of monocytes from the splenic reservoir to sites of inflammation. The sequence is that of Tumor necrosis factor ligand superfamily member 18 from Homo sapiens (Human).